Consider the following 130-residue polypeptide: MVSRDFGREKRLLIPRQFKAVFDSPTAKVPGKHVLLLARPNALDHPRLGLVIGKKSVKLSVGRNRLKRLIRESFRLNQDSLAGWDIVVVARKGLGELENTEVTQQFGKLWKRLARSRPQTAVEAAGSSHA.

It belongs to the RnpA family. As to quaternary structure, consists of a catalytic RNA component (M1 or rnpB) and a protein subunit.

The enzyme catalyses Endonucleolytic cleavage of RNA, removing 5'-extranucleotides from tRNA precursor.. Functionally, RNaseP catalyzes the removal of the 5'-leader sequence from pre-tRNA to produce the mature 5'-terminus. It can also cleave other RNA substrates such as 4.5S RNA. The protein component plays an auxiliary but essential role in vivo by binding to the 5'-leader sequence and broadening the substrate specificity of the ribozyme. This chain is Ribonuclease P protein component, found in Azotobacter vinelandii (strain DJ / ATCC BAA-1303).